The following is a 284-amino-acid chain: NAD kinase (284 aa).

Asp-60 functions as the Proton acceptor in the catalytic mechanism. NAD(+)-binding positions include 60–61, 134–135, Arg-145, Lys-162, Asp-164, 175–180, and Gln-234; these read DG, NE, and TAYSFS.

This sequence belongs to the NAD kinase family. A divalent metal cation is required as a cofactor.

Its subcellular location is the cytoplasm. The catalysed reaction is NAD(+) + ATP = ADP + NADP(+) + H(+). Functionally, involved in the regulation of the intracellular balance of NAD and NADP, and is a key enzyme in the biosynthesis of NADP. Catalyzes specifically the phosphorylation on 2'-hydroxyl of the adenosine moiety of NAD to yield NADP. This chain is NAD kinase, found in Clostridium botulinum (strain Alaska E43 / Type E3).